The primary structure comprises 118 residues: Fluoride-specific ion channel FluC 1 (118 aa).

4 helical membrane passes run 5–25 (FVLV…ISVL), 34–54 (FPFA…FLVS), 56–76 (ALGP…YTTF), and 98–118 (YLGC…MLGV). Na(+)-binding residues include Gly71 and Thr74.

The protein belongs to the fluoride channel Fluc/FEX (TC 1.A.43) family.

It localises to the cell membrane. It catalyses the reaction fluoride(in) = fluoride(out). Na(+) is not transported, but it plays an essential structural role and its presence is essential for fluoride channel function. In terms of biological role, fluoride-specific ion channel. Important for reducing fluoride concentration in the cell, thus reducing its toxicity. In Listeria monocytogenes serotype 4b (strain F2365), this protein is Fluoride-specific ion channel FluC 1.